A 256-amino-acid polypeptide reads, in one-letter code: Triosephosphate isomerase (256 aa).

Asn-12–Lys-14 lines the substrate pocket. His-99 acts as the Electrophile in catalysis. Glu-169 functions as the Proton acceptor in the catalytic mechanism. Residues Gly-175, Ser-214, and Gly-235–Gly-236 contribute to the substrate site.

Belongs to the triosephosphate isomerase family. As to quaternary structure, homodimer.

The protein localises to the cytoplasm. It carries out the reaction D-glyceraldehyde 3-phosphate = dihydroxyacetone phosphate. It functions in the pathway carbohydrate biosynthesis; gluconeogenesis. It participates in carbohydrate degradation; glycolysis; D-glyceraldehyde 3-phosphate from glycerone phosphate: step 1/1. In terms of biological role, involved in the gluconeogenesis. Catalyzes stereospecifically the conversion of dihydroxyacetone phosphate (DHAP) to D-glyceraldehyde-3-phosphate (G3P). The polypeptide is Triosephosphate isomerase (Mesorhizobium japonicum (strain LMG 29417 / CECT 9101 / MAFF 303099) (Mesorhizobium loti (strain MAFF 303099))).